Here is a 415-residue protein sequence, read N- to C-terminus: Peptide chain release factor subunit 1 (415 aa).

This sequence belongs to the eukaryotic release factor 1 family. In terms of assembly, heterodimer of two subunits, one of which binds GTP.

The protein resides in the cytoplasm. In terms of biological role, directs the termination of nascent peptide synthesis (translation) in response to the termination codons UAA, UAG and UGA. The sequence is that of Peptide chain release factor subunit 1 from Thermococcus sibiricus (strain DSM 12597 / MM 739).